The chain runs to 341 residues: MTKITVIGAGSWGTALAMVLADNGHDVRIWGNRPELMDEINTKHENKRYLPGITLPSTIVAYSSLEEALVDVSTVLLVVPTKAYREVLQDMKKVISGPMTWIHASKGIEPGTSKRISEMIEEEIPEHLIRDVVVLSGPSHAEEVALRQATTVTSAAKRMEAAEEVQDLFMNHYFRVYTNPDIIGVELGGALKNIIALAAGITDGLGLGDNAKAALMTRGLTEIARLGRKMGGNPLTFAGLTGMGDLIVTCTSVHSRNWRAGNMLGKGHSLEEVLDSMGMVVEGVRTTKAAYELAEKMEVEMPITAALYDVLFNGKNVKDAVGSLMGRVRKHEVEAIPDLSR.

Serine 11, tryptophan 12, arginine 33, and lysine 106 together coordinate NADPH. 3 residues coordinate sn-glycerol 3-phosphate: lysine 106, glycine 137, and serine 139. Alanine 141 serves as a coordination point for NADPH. Residues lysine 192, aspartate 245, serine 255, arginine 256, and asparagine 257 each contribute to the sn-glycerol 3-phosphate site. The active-site Proton acceptor is lysine 192. Position 256 (arginine 256) interacts with NADPH. The NADPH site is built by valine 280 and glutamate 282.

This sequence belongs to the NAD-dependent glycerol-3-phosphate dehydrogenase family.

It localises to the cytoplasm. The catalysed reaction is sn-glycerol 3-phosphate + NAD(+) = dihydroxyacetone phosphate + NADH + H(+). The enzyme catalyses sn-glycerol 3-phosphate + NADP(+) = dihydroxyacetone phosphate + NADPH + H(+). It participates in membrane lipid metabolism; glycerophospholipid metabolism. Catalyzes the reduction of the glycolytic intermediate dihydroxyacetone phosphate (DHAP) to sn-glycerol 3-phosphate (G3P), the key precursor for phospholipid synthesis. The polypeptide is Glycerol-3-phosphate dehydrogenase [NAD(P)+] (Bacillus cytotoxicus (strain DSM 22905 / CIP 110041 / 391-98 / NVH 391-98)).